A 779-amino-acid polypeptide reads, in one-letter code: Tricorn protease-interacting factor F3 (779 aa).

Substrate-binding positions include glutamate 102 and 231–235 (GAMEN). Position 266 (histidine 266) interacts with Zn(2+). Glutamate 267 (proton acceptor) is an active-site residue. Zn(2+) contacts are provided by histidine 270 and glutamate 289.

Belongs to the peptidase M1 family. In terms of assembly, part of the tricorn proteolytic complex. Zn(2+) is required as a cofactor.

The protein localises to the cytoplasm. In terms of biological role, proteases F1, F2 and F3 degrade oligopeptides produced by Tricorn (themselves probably produced by the proteasome), yielding free amino acids. The polypeptide is Tricorn protease-interacting factor F3 (trf3) (Thermoplasma volcanium (strain ATCC 51530 / DSM 4299 / JCM 9571 / NBRC 15438 / GSS1)).